The primary structure comprises 288 residues: ATP synthase gamma chain (288 aa).

This sequence belongs to the ATPase gamma chain family. As to quaternary structure, F-type ATPases have 2 components, CF(1) - the catalytic core - and CF(0) - the membrane proton channel. CF(1) has five subunits: alpha(3), beta(3), gamma(1), delta(1), epsilon(1). CF(0) has three main subunits: a, b and c.

Its subcellular location is the cell inner membrane. Produces ATP from ADP in the presence of a proton gradient across the membrane. The gamma chain is believed to be important in regulating ATPase activity and the flow of protons through the CF(0) complex. The protein is ATP synthase gamma chain of Blochmanniella floridana.